Consider the following 452-residue polypeptide: Maltoporin (452 aa).

The signal sequence occupies residues 1–25 (MMITLRKLPLAVAVAAGVMSAQAMA).

The protein belongs to the porin LamB (TC 1.B.3) family. Homotrimer formed of three 18-stranded antiparallel beta-barrels, containing three independent channels.

The protein localises to the cell outer membrane. It carries out the reaction beta-maltose(in) = beta-maltose(out). Involved in the transport of maltose and maltodextrins. This chain is Maltoporin, found in Salmonella paratyphi A (strain ATCC 9150 / SARB42).